The chain runs to 839 residues: MTLTRRDFIKANAAAAAATAAAVNLPLVPSMAQAATTDPATAGADIKWDKAACRFCGTGCSVLVGTKGGRVVATQGDPDAPVNRGLNCIKGYFLSKIMYGEDRLTKPLLRMKNGKFDKNGEFTPVTWKQAFDVMEEKFKTAMKAGGPEAVAMFGSGQWTIWEGYAAAKFMKAGLRSNNLDPNARHCMASAVVGFMRTFNMDEPMGCYDDIEKADAFVLWGSNMAEMHPILWSRITDRRLTHPDCQVHVLSTYEHRSFELADNKLVFGPQTDLAILNYIANHIIQTGAVNKDFIQKYCAFMKGDTDIGYGLRPTHPKQKAAKNPDSGKMDPITFEQFAAFVKPYTLEYTARTSCVPAERLKRLAELYADPKKKVVSFWTMGFNQHTRGTWANNLVYNIHLLTGKISTPGCGPFSLTGQPSACGTAREVGTFAHRLPADLVVMNPEHRKIAENIWKLPEGTIPPKMGLHAVAMQRALKDSKLKVYWQQCNNNMQAGPNINEEMYPGWRNPETFIIVSDPYPTVSAMAADLILPTAMWVEKEGAYGNAERRTQFWRQQVNAPGEAKSDLWQVVEFSKRFKVEEVWPAELVAKKPEYRGKTLYDVLFANGQVNKYKLDDMARQHGTAYHNEEARHVGFYLQKGLFEEYAAFGRGHGHDLALFDTYHKARGLRWPVVDGKETLWRYREGFDPYVKKGEGVRFYGQKDGRARIIALPFEPAAEVPDREYNMWLCTGRVLEHWHTGSMTRRVPELYRAVPDAQVFMHPADAELRGLKRGQQVKVISRRGEITLTLETRGRNKPPQGLVFIPFFDEGRLVNKLTLDATCPLSKETDYKKCAVKVVRA.

Positions 1 to 34 (MTLTRRDFIKANAAAAAATAAAVNLPLVPSMAQA) form a signal peptide, tat-type signal. Residues 46-102 (IKWDKAACRFCGTGCSVLVGTKGGRVVATQGDPDAPVNRGLNCIKGYFLSKIMYGED) form the 4Fe-4S Mo/W bis-MGD-type domain. Positions 53, 56, 60, and 88 each coordinate [4Fe-4S] cluster. Mo-bis(molybdopterin guanine dinucleotide)-binding positions include Lys90, Gln157, Asn182, Cys186, 219–226 (WGSNMAEM), 250–254 (STYEH), 269–271 (QTD), Met379, Gln383, Asn489, 515–516 (SD), Lys538, Asp565, and 729–738 (TGRVLEHWHT). Phe805 is a substrate binding site. Mo-bis(molybdopterin guanine dinucleotide) contacts are provided by Asn813 and Lys830.

It belongs to the prokaryotic molybdopterin-containing oxidoreductase family. NasA/NapA/NarB subfamily. In terms of assembly, component of the periplasmic nitrate reductase NapAB complex composed of NapA and NapB. [4Fe-4S] cluster serves as cofactor. It depends on Mo-bis(molybdopterin guanine dinucleotide) as a cofactor. In terms of processing, predicted to be exported by the Tat system. The position of the signal peptide cleavage has not been experimentally proven.

It is found in the periplasm. It catalyses the reaction 2 Fe(II)-[cytochrome] + nitrate + 2 H(+) = 2 Fe(III)-[cytochrome] + nitrite + H2O. Its function is as follows. Catalytic subunit of the periplasmic nitrate reductase complex NapAB. Receives electrons from NapB and catalyzes the reduction of nitrate to nitrite. In Laribacter hongkongensis (strain HLHK9), this protein is Periplasmic nitrate reductase.